A 408-amino-acid chain; its full sequence is Zinc finger protein 764 (408 aa).

Residues 26–97 (VSFADVAVYF…AAQDPEVAKC (72 aa)) enclose the KRAB domain. A disordered region spans residues 91-167 (DPEVAKCQTQ…GRPSLCAHPP (77 aa)). 7 C2H2-type zinc fingers span residues 175–197 (HGCY…VYSH), 203–225 (FHCT…RAIH), 231–253 (HRCL…LRVH), 259–281 (YGCA…RRVH), 287–309 (FPCP…VRTH), 315–337 (YPCP…RRTH), and 343–365 (YPCP…QWVH).

This sequence belongs to the krueppel C2H2-type zinc-finger protein family. Interacts (via KRAB domain) with NR3C1/GR (via NR LBD domain); the interaction regulates transcription factor activity of NR3C1 by directing its actions toward certain biologic pathways.

It localises to the nucleus. Zinc finger protein that functions as a cofactor for steroid hormone receptors, such as NR3C1/GR. Directs NR3C1/GR transcriptional activity toward specific biologic pathways by changing NR3C1/GR binding and transcriptional activity on the glucocorticoid-responsive genes. This chain is Zinc finger protein 764, found in Homo sapiens (Human).